The primary structure comprises 76 residues: Kappa-actitoxin-Avd4d (76 aa).

Positions 1–19 (MNKALFLCLVVLCAAVVFA) are cleaved as a signal peptide. Positions 20–31 (AEDLQKAKHVPF) are excised as a propeptide. 3 disulfides stabilise this stretch: Cys-37-Cys-72, Cys-39-Cys-65, and Cys-55-Cys-73.

It belongs to the sea anemone type 3 (BDS) potassium channel toxin family. In terms of tissue distribution, moderately expressed in the ectodermal tissue from the distal and proximal tentacles, body wall, and oral disk.

It localises to the secreted. The protein localises to the nematocyst. Blocks Kv3 voltage-gated potassium channels. Reduces blood pressure. The protein is Kappa-actitoxin-Avd4d of Anemonia viridis (Snakelocks anemone).